Reading from the N-terminus, the 154-residue chain is Peptidoglycan amidase Tse1 (154 aa).

Cysteine 7 and cysteine 148 form a disulfide bridge. The active-site Nucleophile is cysteine 30. The Proton acceptor role is filled by histidine 91.

In terms of assembly, forms a heterotetramer with Tsi1 consisting of two Tse1 dimers and two Tsi1 dimers. Formation of the complex inactivates Tse1 enzymatic activity.

The protein resides in the host membrane. It localises to the secreted. It catalyses the reaction Hydrolysis of gamma-D-glutamyl bonds to the L-terminus (position 7) of meso-diaminopimelic acid (meso-A2pm) in 7-(L-Ala-gamma-D-Glu)-meso-A2pm and 7-(L-Ala-gamma-D-Glu)-7-(D-Ala)-meso-A2pm. It is required that the D-terminal amino and carboxy groups of meso-A2pm are unsubstituted.. In terms of biological role, toxin secreted by the H1 type VI (H1-T6SS) secretion system into the periplasm of recipient cells. Degrades peptidoglycan via amidase activity thereby helping itself to compete with other bacteria. To protect itself, the bacterium synthesizes immunity protein Tsi1 that specifically interacts with and inactivates cognate toxin. This chain is Peptidoglycan amidase Tse1, found in Pseudomonas aeruginosa (strain ATCC 15692 / DSM 22644 / CIP 104116 / JCM 14847 / LMG 12228 / 1C / PRS 101 / PAO1).